The sequence spans 712 residues: Elongation factor G (712 aa).

The 283-residue stretch at 8–290 (TRYRNIGISA…AVIEFLPSPT (283 aa)) folds into the tr-type G domain. Residues 17-24 (AHIDAGKT), 88-92 (DTPGH), and 142-145 (NKMD) contribute to the GTP site.

The protein belongs to the TRAFAC class translation factor GTPase superfamily. Classic translation factor GTPase family. EF-G/EF-2 subfamily.

Its subcellular location is the cytoplasm. In terms of biological role, catalyzes the GTP-dependent ribosomal translocation step during translation elongation. During this step, the ribosome changes from the pre-translocational (PRE) to the post-translocational (POST) state as the newly formed A-site-bound peptidyl-tRNA and P-site-bound deacylated tRNA move to the P and E sites, respectively. Catalyzes the coordinated movement of the two tRNA molecules, the mRNA and conformational changes in the ribosome. The protein is Elongation factor G of Acinetobacter baumannii (strain AB307-0294).